The following is a 230-amino-acid chain: Cytochrome c oxidase subunit 2 (230 aa).

Over 1 to 26 (MATPAQLGLMDAASPVMEEMIYFHDH) the chain is Mitochondrial intermembrane. Residues 27-48 (VMLVLILITCLIFYSMLVLISS) traverse the membrane as a helical segment. The Mitochondrial matrix segment spans residues 49–62 (KYIYRFLTDGHVIE). A helical transmembrane segment spans residues 63-82 (TVWTVIPAIILVVVALPSLK). The Mitochondrial intermembrane portion of the chain corresponds to 83-230 (LLYLTDELDN…GWCDMMLDEE (148 aa)). 6 residues coordinate Cu cation: His161, Cys196, Glu198, Cys200, His204, and Met207. Mg(2+) is bound at residue Glu198.

This sequence belongs to the cytochrome c oxidase subunit 2 family. Component of the cytochrome c oxidase (complex IV, CIV), a multisubunit enzyme composed of a catalytic core of 3 subunits and several supernumerary subunits. The complex exists as a monomer or a dimer and forms supercomplexes (SCs) in the inner mitochondrial membrane with ubiquinol-cytochrome c oxidoreductase (cytochrome b-c1 complex, complex III, CIII). Cu cation is required as a cofactor.

It is found in the mitochondrion inner membrane. The catalysed reaction is 4 Fe(II)-[cytochrome c] + O2 + 8 H(+)(in) = 4 Fe(III)-[cytochrome c] + 2 H2O + 4 H(+)(out). Functionally, component of the cytochrome c oxidase, the last enzyme in the mitochondrial electron transport chain which drives oxidative phosphorylation. The respiratory chain contains 3 multisubunit complexes succinate dehydrogenase (complex II, CII), ubiquinol-cytochrome c oxidoreductase (cytochrome b-c1 complex, complex III, CIII) and cytochrome c oxidase (complex IV, CIV), that cooperate to transfer electrons derived from NADH and succinate to molecular oxygen, creating an electrochemical gradient over the inner membrane that drives transmembrane transport and the ATP synthase. Cytochrome c oxidase is the component of the respiratory chain that catalyzes the reduction of oxygen to water. Electrons originating from reduced cytochrome c in the intermembrane space (IMS) are transferred via the dinuclear copper A center (CU(A)) of subunit 2 and heme A of subunit 1 to the active site in subunit 1, a binuclear center (BNC) formed by heme A3 and copper B (CU(B)). The BNC reduces molecular oxygen to 2 water molecules using 4 electrons from cytochrome c in the IMS and 4 protons from the mitochondrial matrix. In Branchiostoma floridae (Florida lancelet), this protein is Cytochrome c oxidase subunit 2 (COII).